The primary structure comprises 361 residues: Mycothiol acetyltransferase (361 aa).

N-acetyltransferase domains are found at residues 25–173 (PRVR…LPGS) and 195–361 (VTVL…AWKF). Glu-59 contacts 1D-myo-inositol 2-(L-cysteinylamino)-2-deoxy-alpha-D-glucopyranoside. Residue 98–100 (LAV) participates in acetyl-CoA binding. 3 residues coordinate 1D-myo-inositol 2-(L-cysteinylamino)-2-deoxy-alpha-D-glucopyranoside: Glu-229, Lys-280, and Glu-295. Residues 299 to 301 (IGL) and 306 to 312 (QGRGLGR) contribute to the acetyl-CoA site. 1D-myo-inositol 2-(L-cysteinylamino)-2-deoxy-alpha-D-glucopyranoside is bound at residue Tyr-333. An acetyl-CoA-binding site is contributed by 338-343 (NAPAVH).

It belongs to the acetyltransferase family. MshD subfamily. In terms of assembly, monomer.

It carries out the reaction 1D-myo-inositol 2-(L-cysteinylamino)-2-deoxy-alpha-D-glucopyranoside + acetyl-CoA = mycothiol + CoA + H(+). Catalyzes the transfer of acetyl from acetyl-CoA to desacetylmycothiol (Cys-GlcN-Ins) to form mycothiol. This Corynebacterium kroppenstedtii (strain DSM 44385 / JCM 11950 / CIP 105744 / CCUG 35717) protein is Mycothiol acetyltransferase.